The sequence spans 428 residues: Something about silencing protein 10 (428 aa).

A disordered region spans residues 1–93 (MDSDGDDYVM…NTMDWGSKRS (93 aa)). Composition is skewed to acidic residues over residues 15–24 (QEYDDEEREI) and 46–62 (SDDD…EQQD). Ser152, Ser323, Ser324, and Ser337 each carry phosphoserine. The disordered stretch occupies residues 317–386 (GQQASVSSDD…LRNPRVKHRG (70 aa)). A compositionally biased stretch (acidic residues) spans 324–336 (SDDDDNDDDDDAE). Residues 344-353 (EEAGEEEEEE) show a composition bias toward acidic residues. Basic residues predominate over residues 370-386 (TPHRKKELRNPRVKHRG).

The protein belongs to the SAS10 family.

It localises to the nucleus. Essential for gene silencing: has a role in the structure of silenced chromatin. May be involved in gene regulation during development. Binds RNA. This Drosophila melanogaster (Fruit fly) protein is Something about silencing protein 10.